The following is a 581-amino-acid chain: Oligo-1,6-glucosidase IMA5 (581 aa).

Catalysis depends on D210, which acts as the Nucleophile. Catalysis depends on E272, which acts as the Proton donor.

This sequence belongs to the glycosyl hydrolase 13 family.

The catalysed reaction is Hydrolysis of (1-&gt;6)-alpha-D-glucosidic linkages in some oligosaccharides produced from starch and glycogen by alpha-amylase, and in isomaltose.. Its function is as follows. Alpha-glucosidase with specificity for isomaltose, maltose, and palatinose. This chain is Oligo-1,6-glucosidase IMA5 (IMA5), found in Saccharomyces cerevisiae (strain ATCC 204508 / S288c) (Baker's yeast).